The following is a 515-amino-acid chain: Probable cytochrome P450 4p3 (515 aa).

Residues Glu-322 and Cys-461 each contribute to the heme site.

This sequence belongs to the cytochrome P450 family. It depends on heme as a cofactor.

Its subcellular location is the endoplasmic reticulum membrane. The protein resides in the microsome membrane. Its function is as follows. May be involved in the metabolism of insect hormones and in the breakdown of synthetic insecticides. The polypeptide is Probable cytochrome P450 4p3 (Cyp4p3) (Drosophila melanogaster (Fruit fly)).